A 239-amino-acid polypeptide reads, in one-letter code: Cysteine-rich venom protein 2 (239 aa).

Residues 1–19 form the signal peptide; sequence MIALIVLPILAAVLQQSSG. One can recognise an SCP domain in the interval 38 to 166; that stretch reads VDLHNSLRRS…EYSYFYVCQY (129 aa). Disulfide bonds link Cys-75/Cys-153, Cys-92/Cys-167, Cys-148/Cys-164, Cys-186/Cys-193, Cys-189/Cys-198, Cys-202/Cys-234, and Cys-219/Cys-232. Positions 198–234 constitute a ShKT domain; that stretch reads CTNPCPKKISTQLPRFGPQAGCQDKQMQSDCSATCFC.

It belongs to the CRISP family. In terms of tissue distribution, expressed by the venom gland.

The protein localises to the secreted. In terms of biological role, weakly blocks contraction of smooth muscle elicited by high potassium-induced depolarization, but does not block caffeine-stimulated contraction. May target voltage-gated calcium channels on smooth muscle. The polypeptide is Cysteine-rich venom protein 2 (Sistrurus catenatus edwardsii (Desert massasauga)).